The primary structure comprises 150 residues: MSLVRRSNVFDPFSLDLWDPFDSVFRSVVPATSDNDTAAFANARIDWKETPESHVFKADLPGVKKEEVKVEVEEGNVLVISGQRSKEKEDKNDKWHRVERSSGQFMRRFRLPENAKVDQVKAGLENGVLTVTVPKAEVKKPEVKAIEISG.

The tract at residues 1–42 is important for thermostability under elevated temperature; it reads MSLVRRSNVFDPFSLDLWDPFDSVFRSVVPATSDNDTAAFAN. One can recognise a sHSP domain in the interval 36 to 150; it reads DTAAFANARI…PEVKAIEISG (115 aa).

Belongs to the small heat shock protein (HSP20) family. As to quaternary structure, forms oligomeric structures.

The protein resides in the cytoplasm. The sequence is that of 16.9 kDa class I heat shock protein 1 (HSP16.9A) from Oryza sativa subsp. japonica (Rice).